Here is a 372-residue protein sequence, read N- to C-terminus: L-selectin (372 aa).

Positions 1 to 28 are cleaved as a signal peptide; that stretch reads MIFPWKCQSTQRDLWNIFKLWGWTMLCC. Residues 29–38 constitute a propeptide that is removed on maturation; that stretch reads DFLAHHGTDC. Residues 39–332 are Extracellular-facing; that stretch reads WTYHYSEKPM…FSMIKEGDYN (294 aa). A C-type lectin domain is found at 55–155; it reads RFCRDNYTDL…ACHKLKAALC (101 aa). Cystine bridges form between Cys-57/Cys-155, Cys-128/Cys-147, Cys-160/Cys-171, Cys-165/Cys-180, Cys-182/Cys-191, Cys-197/Cys-241, Cys-227/Cys-254, Cys-259/Cys-303, and Cys-289/Cys-316. 2 N-linked (GlcNAc...) asparagine glycosylation sites follow: Asn-60 and Asn-104. Glu-118, Asn-120, Glu-126, Asn-143, and Asp-144 together coordinate Ca(2+). Residues 156-192 form the EGF-like domain; it reads YTASCQPWSCSGHGECVEIINNYTCNCDVGYYGPQCQ. An N-linked (GlcNAc...) asparagine glycan is attached at Asn-177. 2 consecutive Sushi domains span residues 195–256 and 257–318; these read IQCE…TCQV and IQCE…ICQK. 3 N-linked (GlcNAc...) asparagine glycosylation sites follow: Asn-232, Asn-246, and Asn-271. Residues 333–355 traverse the membrane as a helical segment; that stretch reads PLFIPVAVMVTAFSGLAFIIWLA. Topologically, residues 356–372 are cytoplasmic; sequence RRLKKGKKSKRSMNDPY.

The protein belongs to the selectin/LECAM family. Interaction with SELPLG/PSGL1 and PODXL2 is required for promoting recruitment and rolling of leukocytes. This interaction is dependent on the sialyl Lewis X glycan modification of SELPLG and PODXL2, and tyrosine sulfation modifications of SELPLG. Sulfation on 'Tyr-51' of SELPLG is important for L-selectin binding. Post-translationally, N-glycosylated. Expressed in B-cell lines and T-lymphocytes.

It is found in the cell membrane. Calcium-dependent lectin that mediates cell adhesion by binding to glycoproteins on neighboring cells. Mediates the adherence of lymphocytes to endothelial cells of high endothelial venules in peripheral lymph nodes. Promotes initial tethering and rolling of leukocytes in endothelia. The sequence is that of L-selectin (SELL) from Homo sapiens (Human).